The primary structure comprises 339 residues: RxLR effector protein SFI4 (339 aa).

The first 24 residues, 1 to 24 (MRVLRVTFLWALLLLVAFSASVYA), serve as a signal peptide directing secretion. Positions 51–74 (RGLRNSGMKLNDAKDFKGAIAKLR) match the RxLR-dEER motif. 4 TPR repeats span residues 106–139 (AQILNDYGTVLIRAKQYDEAIEVLEDSVAMVEKI), 190–223 (IEASLRIAEGYKKLGNTKKNLKVLKDAVEAQNGE), 232–265 (AELYMELSTAHVAVGEIDDALRAAEVASAIFRQR), and 274–307 (AFSLNALAGVKMRQKKVDEAIKLLEQAHRIAVQI).

It belongs to the RxLR effector family.

It is found in the secreted. The protein resides in the host nucleus. It localises to the host cytoplasm. In terms of biological role, effector that suppresses flg22-induced post-translational MAP kinase activation in tomato but not in Arabidopsis. The perception of highly conserved pathogen- or microbe-associated molecular patterns (PAMPs/MAMPs), such as flg22, triggers converging signaling pathways recruiting MAP kinase cascades and inducing transcriptional re-programming, yielding a generic antimicrobial response. The sequence is that of RxLR effector protein SFI4 from Phytophthora infestans (strain T30-4) (Potato late blight agent).